The chain runs to 99 residues: NADH-ubiquinone oxidoreductase chain 2 (99 aa).

Transmembrane regions (helical) follow at residues Phe-22–Ile-42 and Val-65–Ile-85.

This sequence belongs to the complex I subunit 2 family.

Its subcellular location is the mitochondrion inner membrane. The enzyme catalyses a ubiquinone + NADH + 5 H(+)(in) = a ubiquinol + NAD(+) + 4 H(+)(out). Functionally, core subunit of the mitochondrial membrane respiratory chain NADH dehydrogenase (Complex I) that is believed to belong to the minimal assembly required for catalysis. Complex I functions in the transfer of electrons from NADH to the respiratory chain. The immediate electron acceptor for the enzyme is believed to be ubiquinone. The polypeptide is NADH-ubiquinone oxidoreductase chain 2 (ND2) (Cyanidium caldarium (Red alga)).